The primary structure comprises 219 residues: Probable nicotinate-nucleotide adenylyltransferase (219 aa).

The protein belongs to the NadD family.

It carries out the reaction nicotinate beta-D-ribonucleotide + ATP + H(+) = deamido-NAD(+) + diphosphate. Its pathway is cofactor biosynthesis; NAD(+) biosynthesis; deamido-NAD(+) from nicotinate D-ribonucleotide: step 1/1. Its function is as follows. Catalyzes the reversible adenylation of nicotinate mononucleotide (NaMN) to nicotinic acid adenine dinucleotide (NaAD). The polypeptide is Probable nicotinate-nucleotide adenylyltransferase (Pseudomonas putida (strain GB-1)).